Here is a 374-residue protein sequence, read N- to C-terminus: Dispase autolysis-inducing protein (374 aa).

A signal peptide spans 1-26 (MKRMGWAVTAAVTTIVLAQSSLAAQA).

Its subcellular location is the secreted. Induces autolysis of dispase and thermolysin. The protein is Dispase autolysis-inducing protein (daip) of Streptomyces mobaraensis (Streptoverticillium mobaraense).